The primary structure comprises 2543 residues: Polyketide synthase PksR (2543 aa).

Residues 165–269 form a methyltransferase region; sequence LEIGAGTGGT…KAVLKKNGLL (105 aa). The 77-residue stretch at 376 to 452 folds into the Carrier 1 domain; sequence SLIEQTAQFV…ELVEYLVKGH (77 aa). At Ser413 the chain carries O-(pantetheine 4'-phosphoryl)serine. The segment at 465–485 is disordered; it reads TKPAKNEAPLQTERTDPNKPF. The 433-residue stretch at 527–959 folds into the Ketosynthase family 3 (KS3) 1 domain; it reads TEDIAIIGVS…GAYANLIIEE (433 aa). The active-site For beta-ketoacyl synthase 1 activity is the Cys700. The interval 1114 to 1242 is N-terminal hotdog fold; sequence HFDVSSINEK…GQCGIGSFEP (129 aa). Positions 1114 to 1397 constitute a PKS/mFAS DH domain; that stretch reads HFDVSSINEK…LKQLRISNQR (284 aa). Positions 1255 to 1397 are C-terminal hotdog fold; the sequence is TKLHHIDQMY…LKQLRISNQR (143 aa). Positions 1407–1485 constitute a Carrier 2 domain; sequence SNLKARIRSY…ELIDFFADKH (79 aa). Ser1445 bears the O-(pantetheine 4'-phosphoryl)serine mark. Residues 1528–1946 form the Ketosynthase family 3 (KS3) 2 domain; the sequence is ADGIAIIGMS…GVNAHVILEE (419 aa). Catalysis depends on for beta-ketoacyl synthase 2 activity residues Cys1680, His1815, and His1862. The Carrier 3 domain occupies 2134–2208; that stretch reads RINNSSDHHI…DMMDLIAKKQ (75 aa). O-(pantetheine 4'-phosphoryl)serine is present on Ser2168. Positions 2234-2514 are thioesterase; it reads RPVFWFHGGV…EFCEKLYSNR (281 aa).

Pantetheine 4'-phosphate is required as a cofactor.

The protein resides in the cytoplasm. The protein operates within antibiotic biosynthesis; bacillaene biosynthesis. In terms of biological role, involved in some intermediate steps for the synthesis of the antibiotic polyketide bacillaene which is involved in secondary metabolism. In Bacillus subtilis (strain 168), this protein is Polyketide synthase PksR (pksR).